We begin with the raw amino-acid sequence, 186 residues long: MNCPLLTIKAAAKLITEGGVLAYPTEAVYGLGCDPLNKDAFQQLLRLKQRPLEKGVILIASSIAQIEPFVKLHNQAWTEKVLASWQVLNQPVTWVLPATDNVPEWITGGRNTVAVRVTQHPDVMALCNQLNFPIVSTSANLSGEDPVTTMEACCKAFPALAIMQGNLMGISAPSQIWEAQTQKRLR.

Residues 5-186 (LLTIKAAAKL…WEAQTQKRLR (182 aa)) form the YrdC-like domain.

This sequence belongs to the SUA5 family. TsaC subfamily.

The protein localises to the cytoplasm. It catalyses the reaction L-threonine + hydrogencarbonate + ATP = L-threonylcarbamoyladenylate + diphosphate + H2O. In terms of biological role, required for the formation of a threonylcarbamoyl group on adenosine at position 37 (t(6)A37) in tRNAs that read codons beginning with adenine. Catalyzes the conversion of L-threonine, HCO(3)(-)/CO(2) and ATP to give threonylcarbamoyl-AMP (TC-AMP) as the acyladenylate intermediate, with the release of diphosphate. This Hydrogenovibrio crunogenus (strain DSM 25203 / XCL-2) (Thiomicrospira crunogena) protein is Threonylcarbamoyl-AMP synthase.